We begin with the raw amino-acid sequence, 239 residues long: Fibroblast growth factor 3 (239 aa).

An N-terminal signal peptide occupies residues 1–17; that stretch reads MGLIWLLLLSLLEPGWP. The N-linked (GlcNAc...) asparagine glycan is linked to asparagine 65. The segment at 193-239 is disordered; the sequence is QLQSGLPRPPGKGVQPRRRRQKQSPDNLEPSHVQASRLGSQLEASAH. A compositionally biased stretch (polar residues) spans 225–239; sequence VQASRLGSQLEASAH.

The protein belongs to the heparin-binding growth factors family. Interacts with FGFR1 and FGFR2. Affinity between fibroblast growth factors (FGFs) and their receptors is increased by heparan sulfate glycosaminoglycans that function as coreceptors.

It localises to the secreted. Plays an important role in the regulation of embryonic development, cell proliferation, and cell differentiation. Required for normal ear development. This is Fibroblast growth factor 3 (FGF3) from Homo sapiens (Human).